We begin with the raw amino-acid sequence, 349 residues long: Core protein VP7 (349 aa).

Asn287 is a glycosylation site (N-linked (GlcNAc...) asparagine; by host).

The protein belongs to the orbivirus VP7 family. Homotrimer that assemble in a complex of 260 capsomers on an inner scaffold composed of VP3.

It localises to the virion. Its function is as follows. The VP7 protein is one of the five proteins (with VP1, VP3, VP4, and VP6) which form the inner capsid of the virus. The polypeptide is Core protein VP7 (Segment-7) (Antilocapra americana (Pronghorn)).